Reading from the N-terminus, the 157-residue chain is SsrA-binding protein (157 aa).

Positions Lys132 to Gly157 are disordered. The segment covering Asp135–Arg151 has biased composition (basic and acidic residues).

This sequence belongs to the SmpB family.

It is found in the cytoplasm. In terms of biological role, required for rescue of stalled ribosomes mediated by trans-translation. Binds to transfer-messenger RNA (tmRNA), required for stable association of tmRNA with ribosomes. tmRNA and SmpB together mimic tRNA shape, replacing the anticodon stem-loop with SmpB. tmRNA is encoded by the ssrA gene; the 2 termini fold to resemble tRNA(Ala) and it encodes a 'tag peptide', a short internal open reading frame. During trans-translation Ala-aminoacylated tmRNA acts like a tRNA, entering the A-site of stalled ribosomes, displacing the stalled mRNA. The ribosome then switches to translate the ORF on the tmRNA; the nascent peptide is terminated with the 'tag peptide' encoded by the tmRNA and targeted for degradation. The ribosome is freed to recommence translation, which seems to be the essential function of trans-translation. This chain is SsrA-binding protein, found in Rhodopseudomonas palustris (strain ATCC BAA-98 / CGA009).